The following is a 514-amino-acid chain: FAD-dependent monooxygenase CPUR_05423 (514 aa).

FAD contacts are provided by valine 79 and arginine 146. Arginine 227 is an active-site residue. Residues aspartate 358 and glycine 371 each contribute to the FAD site.

This sequence belongs to the paxM FAD-dependent monooxygenase family. It depends on FAD as a cofactor.

It participates in pigment biosynthesis. Functionally, FAD-dependent monooxygenase; part of the ergochrome gene cluster responsible for the typical purple-black color of the ergot sclerotia. The ergochrome gene cluster produces several ergot pigments including the yellow ergochrome secalonic acid and its derivatives, as well as the red anthraquinones endocrocin and clavorubin. The pathway begins with the synthesis of atrochrysone thioester by the polyketide synthase (PKS) CPUR_05437. The atrochrysone carboxyl ACP thioesterase CPUR_05436 then breaks the thioester bond and releases the atrochrysone carboxylic acid from CPUR_05437. The atrochrysone carboxylic acid is then converted to atrochrysone which is further transformed into emodin anthrone. The next step is performed by the anthrone oxygenase CPUR_05434 that catalyzes the oxidation of emodinanthrone to emodin. Emodin is further modified to yield monodictyphenone via several steps involving CPUR_05427, CPUR_05428, CPUR_05429 and CPUR_05430. The short chain dehydrogenase/reductase CPUR_05418 then catalyzes the C-5 ketoreduction to give the xanthone skeleton of the monomeric units. Ergochromes formation requires further dimerization steps of different xanthone units, probably catalyzed by the cytochrome P450 monooxygenase CPUR_05419. CPUR_05425, CPUR_05426 and CPUR_05431 are unique to Claviceps, thus it is likely that they are involved in further modification of xanthone units or in their dimerization. The yellow ergochromes and the red anthraquinone pigments endocrocin and clavorubin are products from the same PKS derived precursors and the latter are likely shunt products in the pathway of xanthone biosynthesis. It is proposed that atrochrysone carboxylic acid released from the PKS CPUR_05437 can also be converted to endocrocin anthrone which is further oxidized into endocrocin by CPUR_05435. Endocrocin could be then modified to clavorubin, possibly by CPUR_05423 and CPUR_05431. Clavorubin is the principal anthraquinone metabolite produced by the cluster with a much higher yield compared to endocrocin. The polypeptide is FAD-dependent monooxygenase CPUR_05423 (Claviceps purpurea (strain 20.1) (Ergot fungus)).